A 976-amino-acid polypeptide reads, in one-letter code: MKRGKLWGRLVSAAGLSLSIFLSSIGNVSTAYAMESNDALVLDETKENTESATDASSNEASDAEADNDTDEAITDASSKELSAENDGASESDSSFDEYDHTALPETDEITVTAAGELSTAKAELYTLAPREAREADNSLVTRDSIHDGAILHAFCWSFNTIADNMADIADAGYTAVQTSPINECLSTNPGMNLHGPDGMWYYHYQPTDWVIGNYQLGSRDEFKHMCDVADEYGVAVIVDILPNHTTPSTGSIAKALMEAAGGSDALYHATGKIGGGYTDRLELTYYSMGGLPDVDTENTGFQQYFYEFLKDCVYLGADGFRIDTAKHISLPDDPVPSDYSDAGRNTFYPNMREALNEYSEEVGTKSYDELFVYGEVLQGTNDRLAAYQQYIGGTTASNYGSSLRSALSSGNLSVNRLLDYQIYDDTAYGSTYTADTEKLVTWVESHDNYMNDSESCWKSIDDDMVIMGWSIIAARDAGTPLFFSRPNNSSAENPYGDNLIGAAGSPIYKAPEVKAVNLFREKMGEADEYLSNPGGNIQTLMIERYNDTVQGAVIVNAAQTRTTISTETHLSDGIYPDQVEGSNSVFLVKDGVLSGSVEGEGVVVLSEKMDGTGKVVSFYNNKNWNGVVARVDNAEETLDTIDENDGWFQVTVLDDEFTIRFESADGKEVSPEFQITAESGTFATPDSSELYYSKAEAEEGLGIHTYPVYFFNTENWGSVYTYGWLDGGAQLFGGWPGTVAVNEGSGWYRADVKTTGEITAFNLIFNNGNGIQTVNVEGITPDSKDIYLAVDAEKSNGQLIVNRYEDKESAEKALGVSGSYTTAYFYNTEGWDKVCAYTWGATALGDWPGKELTQDEDGWYSVVLPAGPSEDLNIIFNNGNNGKQTNDMKISDMKYRFILNNGISYQKYGSKKDAMEAIAGAGDVTYETVYFYNEKADDANWKNVYLYVFGGTDGEYNNLVGTWPGKLMEKEEDSNG.

An N-terminal signal peptide occupies residues M1–A33. Residues T45–Y98 form a disordered region. Residues E50–A60 are compositionally biased toward low complexity. 2 stretches are compositionally biased toward acidic residues: residues S61–I73 and G87–D96. Residues N243, T284, and D293 each coordinate Ca(2+). D323 acts as the Nucleophile in catalysis. Residue H327 coordinates Ca(2+). The active-site Proton donor is E375.

It belongs to the glycosyl hydrolase 13 family. As to quaternary structure, monomer. The cofactor is Ca(2+).

The catalysed reaction is Endohydrolysis of (1-&gt;4)-alpha-D-glucosidic linkages in polysaccharides containing three or more (1-&gt;4)-alpha-linked D-glucose units.. In Butyrivibrio fibrisolvens, this protein is Alpha-amylase (amyA).